Consider the following 912-residue polypeptide: Cadherin-2 (912 aa).

Positions 1 to 28 (MCRIAGTPPRILPPLALMLLAALQQAPI) are cleaved as a signal peptide. Residues 29–164 (KATCEDMLCK…DSSHLKRQKR (136 aa)) constitute a propeptide that is removed on maturation. Cadherin domains follow at residues 165 to 272 (DWVI…RPEF), 273 to 387 (LHQV…PPEF), 388 to 502 (TAMT…SPYF), 503 to 609 (VPNP…DNAP), and 610 to 720 (QVNP…DVDR). At 165–729 (DWVIPPINLP…RIVGAGLGTG (565 aa)) the chain is on the extracellular side. Positions 175, 231, 233, 264, 265, 266, 267, and 268 each coordinate Ca(2+). N-linked (GlcNAc...) asparagine glycosylation is present at asparagine 278. Ca(2+)-binding residues include aspartate 298, aspartate 300, and asparagine 306. N-linked (GlcNAc...) asparagine glycosylation is present at asparagine 330. Aspartate 358 provides a ligand contact to Ca(2+). Residues asparagine 407, asparagine 578, asparagine 628, and asparagine 657 are each glycosylated (N-linked (GlcNAc...) asparagine). The chain crosses the membrane as a helical span at residues 730–752 (AIIAILLCIIILLILVLMFVVWM). Residues 753–912 (KRRDKERQAK…LADMYGGGDD (160 aa)) are Cytoplasmic-facing. The segment covering 869–886 (SGSTAGSLSSLNSSSSGG) has biased composition (low complexity). The segment at 869–890 (SGSTAGSLSSLNSSSSGGEQDY) is disordered.

As to quaternary structure, homodimer (via extracellular region). Can also form heterodimers with other cadherins (via extracellular region). Dimerization occurs in trans, i.e. with a cadherin chain from another cell. Interacts with CTNNA2. In terms of tissue distribution, expressed at intercalated disks in the heart (at protein level).

Its subcellular location is the cell membrane. It localises to the sarcolemma. The protein resides in the cell junction. The protein localises to the cell surface. It is found in the desmosome. Its subcellular location is the adherens junction. Functionally, calcium-dependent cell adhesion protein; preferentially mediates homotypic cell-cell adhesion. Cadherins may thus contribute to the sorting of heterogeneous cell types, and thereby play an important role during embryonic development. Required for proper neurite branching, and pre- and postsynaptic organization. The polypeptide is Cadherin-2 (CDH2) (Gallus gallus (Chicken)).